The primary structure comprises 545 residues: MESYKPVWLKGAVILAINLIDKGYKPVAVGLGERDFYIDVKSDTSITLDEVKKAINENVLANVSIENNQIVYKGNKVSIIEDKVSISTNLNPKYFEILNISTHHPNPNEQYVRIRGVAFETEEQLKDYLSWLEKAEETDHRLIGEKLDLFSFHEEAGSGLVLFHPKGQTIRNELIAFMREINDSMGYQEVYTSHVFKTDIWKISGHYTLYRDKLIVFNMEGDEYGVKPMNCPAHILIYKSKPRTYRDLPIRFSEFGHVYRWEKKGELYGLLRVRGFVQDDGHIFLREDQLREEIKMLISKTVEVWHKFGFKDDDIKPYLSTRPDESIGSDELWEKATNALISALQESGLKFGIKEKEGAFYGPKIDFEIRDSLGRWWQLSTIQVDFNLPERFKLEYIDKDGIKKRPVMVHRAIYGSIDRFVAILLEHFKGKLPTWLSSVQVRVLPITDEVNEYAEKVLNDMRKRRIRAEIDYAGETLSKRIKNAYDQGVPYILIVGKKEASEGTVTVRARGNIEVRNVKFEKFLELLITEIAQRDVEQTTVKALK.

The segment at 139 to 433 (DHRLIGEKLD…LLEHFKGKLP (295 aa)) is catalytic. Zn(2+)-binding residues include C231, H282, and H410.

Belongs to the class-II aminoacyl-tRNA synthetase family. Homodimer. Probably interacts with its editing subunit. Requires Zn(2+) as cofactor.

The protein resides in the cytoplasm. It carries out the reaction tRNA(Thr) + L-threonine + ATP = L-threonyl-tRNA(Thr) + AMP + diphosphate + H(+). In terms of biological role, catalyzes the attachment of threonine to tRNA(Thr) in a two-step reaction: L-threonine is first activated by ATP to form Thr-AMP and then transferred to the acceptor end of tRNA(Thr). Also activates L-serine and transfers it to tRNA(Thr) but cannot deacylate incorrectly charged amino acid; unlike most archaea the editing function is found in a freestanding protein. The chain is Threonine--tRNA ligase catalytic subunit from Saccharolobus islandicus (strain Y.G.57.14 / Yellowstone #1) (Sulfolobus islandicus).